A 520-amino-acid chain; its full sequence is 4-hydroxyphenylacetate 3-monooxygenase oxygenase component (520 aa).

Belongs to the FADH(2)-utilizing monooxygenase family. In terms of assembly, 4-HPA 3-monooxygenase consists of a reductase component HpaC and an oxygenase component HpaB.

The enzyme catalyses 4-hydroxyphenylacetate + FADH2 + O2 = 3,4-dihydroxyphenylacetate + FAD + H2O + H(+). Its pathway is aromatic compound metabolism; 4-hydroxyphenylacetate degradation; pyruvate and succinate semialdehyde from 4-hydroxyphenylacetate: step 1/7. In terms of biological role, utilizes FADH(2) supplied by HpaC or by another flavin reductase, to catalyze the hydroxylation of 4-hydroxyphenylacetic acid, leading to the production of 3,4-DHPA. Can also oxidize phenol to catechol, and hydroxylate other phenol derivatives. In Escherichia coli, this protein is 4-hydroxyphenylacetate 3-monooxygenase oxygenase component (hpaB).